Consider the following 408-residue polypeptide: CinA-like protein (408 aa).

The protein belongs to the CinA family.

The sequence is that of CinA-like protein from Anaeromyxobacter sp. (strain K).